A 317-amino-acid polypeptide reads, in one-letter code: MGQPNVPLVAVVGPTASGKSDVGVALAHLLEREHGRPGEVVNADAMQLYRGMDVGTAKLTPAEREGVPHHLLDVLDVTETAEVARFQADARAAVEDVTARGGLPLLVGGSGLYVRAAVDDLRFPGTDPEVRARWEAELAVLGPHALHARLAERDPAAAAKILPGNGRRIVRALEVGELTGRPFAASLPEQTYLRPTVQVGLAVPREQLDARIDARVERMWAAGLVAEVRDLEARGLREGRTASRALGYAQVLDAFDGTTTEDEARELTARLTRRFARKQESWFRRDPRVHWLPAPDGSDPLDLARRVLELLPVASAA.

Residue 13–20 (GPTASGKS) participates in ATP binding. 15–20 (TASGKS) lines the substrate pocket.

The protein belongs to the IPP transferase family. In terms of assembly, monomer. Requires Mg(2+) as cofactor.

The enzyme catalyses adenosine(37) in tRNA + dimethylallyl diphosphate = N(6)-dimethylallyladenosine(37) in tRNA + diphosphate. Its function is as follows. Catalyzes the transfer of a dimethylallyl group onto the adenine at position 37 in tRNAs that read codons beginning with uridine, leading to the formation of N6-(dimethylallyl)adenosine (i(6)A). The polypeptide is tRNA dimethylallyltransferase (Kineococcus radiotolerans (strain ATCC BAA-149 / DSM 14245 / SRS30216)).